Reading from the N-terminus, the 200-residue chain is Urease accessory protein UreG (200 aa).

8-15 (GPVGSGKT) contributes to the GTP binding site.

It belongs to the SIMIBI class G3E GTPase family. UreG subfamily. As to quaternary structure, homodimer. UreH, UreF and UreG form a complex that acts as a GTP-hydrolysis-dependent molecular chaperone, activating the urease apoprotein by helping to assemble the nickel containing metallocenter of UreC. The UreE protein probably delivers the nickel.

It is found in the cytoplasm. Facilitates the functional incorporation of the urease nickel metallocenter. This process requires GTP hydrolysis, probably effectuated by UreG. The protein is Urease accessory protein UreG of Helicobacter hepaticus (strain ATCC 51449 / 3B1).